The sequence spans 627 residues: Polyadenylate-binding protein, cytoplasmic and nuclear (627 aa).

Positions 1–11 are enriched in polar residues; the sequence is MSAADANQVQE. Positions 1-46 are disordered; sequence MSAADANQVQESLEKLNLDSAPVASTEETEQTASGETEEAADSAQV. 4 consecutive RRM domains span residues 51-129, 139-216, 232-309, and 335-412; these read ASLY…WSQR, GNIF…KHIS, TNVY…RAQK, and VNLF…LAQR. Residues 511 to 535 are compositionally biased toward low complexity; the sequence is DFNNGANGGRQQRGYYPNRNQNQKG. A disordered region spans residues 511–537; sequence DFNNGANGGRQQRGYYPNRNQNQKGRQ. One can recognise a PABC domain in the interval 537 to 618; sequence QQKDLAAIIA…ALTAFEEYKK (82 aa).

Belongs to the polyadenylate-binding protein type-1 family.

The protein localises to the cytoplasm. Its subcellular location is the nucleus. Functionally, binds the poly(A) tail of mRNA. Appears to be an important mediator of the multiple roles of the poly(A) tail in mRNA biogenesis, stability and translation. In the nucleus, involved in both mRNA cleavage and polyadenylation. Is also required for efficient mRNA export to the cytoplasm. Acts in concert with a poly(A)-specific nuclease (PAN) to affect poly(A) tail shortening, which may occur concomitantly with either nucleocytoplasmic mRNA transport or translational initiation. In the cytoplasm, stimulates translation initiation and regulates mRNA decay through translation termination-coupled poly(A) shortening, probably mediated by PAN. This is Polyadenylate-binding protein, cytoplasmic and nuclear (PAB1) from Debaryomyces hansenii (strain ATCC 36239 / CBS 767 / BCRC 21394 / JCM 1990 / NBRC 0083 / IGC 2968) (Yeast).